Consider the following 241-residue polypeptide: Ribosome-recycling factor, mitochondrial (241 aa).

It belongs to the RRF family.

Its subcellular location is the mitochondrion. Functionally, necessary for protein synthesis in mitochondria. Functions as a ribosome recycling factor in mitochondria. This is Ribosome-recycling factor, mitochondrial (RRF1) from Kluyveromyces lactis (strain ATCC 8585 / CBS 2359 / DSM 70799 / NBRC 1267 / NRRL Y-1140 / WM37) (Yeast).